The sequence spans 752 residues: Photosystem I P700 chlorophyll a apoprotein A1 (752 aa).

The next 8 helical transmembrane spans lie at 73-96 (IFSA…FHGA), 159-182 (LYVT…FHYH), 198-222 (LNHH…HVSL), 294-312 (IAHH…GHMY), 349-372 (WHAN…HHMY), 388-414 (LSLF…IFMI), 436-458 (ALIS…LYIH), and 533-551 (FMVH…LILL). [4Fe-4S] cluster contacts are provided by Cys-575 and Cys-584. 2 helical membrane passes run 591-612 (HVFL…HFSW) and 666-688 (ISAY…MFLF). Position 677 (His-677) interacts with chlorophyll a'. Residues Met-685 and Tyr-693 each contribute to the chlorophyll a site. Trp-694 contacts phylloquinone. The chain crosses the membrane as a helical span at residues 726-746 (AVGAAHYLLGGIATTWAFFLS).

This sequence belongs to the PsaA/PsaB family. In terms of assembly, the PsaA/B heterodimer binds the P700 chlorophyll special pair and subsequent electron acceptors. PSI consists of a core antenna complex that captures photons, and an electron transfer chain that converts photonic excitation into a charge separation. The eukaryotic PSI reaction center is composed of at least 11 subunits. The cofactor is P700 is a chlorophyll a/chlorophyll a' dimer, A0 is one or more chlorophyll a, A1 is one or both phylloquinones and FX is a shared 4Fe-4S iron-sulfur center..

The protein resides in the plastid. The protein localises to the chloroplast thylakoid membrane. The enzyme catalyses reduced [plastocyanin] + hnu + oxidized [2Fe-2S]-[ferredoxin] = oxidized [plastocyanin] + reduced [2Fe-2S]-[ferredoxin]. In terms of biological role, psaA and PsaB bind P700, the primary electron donor of photosystem I (PSI), as well as the electron acceptors A0, A1 and FX. PSI is a plastocyanin/cytochrome c6-ferredoxin oxidoreductase, converting photonic excitation into a charge separation, which transfers an electron from the donor P700 chlorophyll pair to the spectroscopically characterized acceptors A0, A1, FX, FA and FB in turn. Oxidized P700 is reduced on the lumenal side of the thylakoid membrane by plastocyanin or cytochrome c6. The protein is Photosystem I P700 chlorophyll a apoprotein A1 of Cyanidium caldarium (Red alga).